The primary structure comprises 349 residues: Early nodulin-like protein 2 (349 aa).

The signal sequence occupies residues 1–28 (MTFLKMKSLSFFFTILLSLSTLFTISNA). The region spanning 29-130 (RKFNVGGSGA…GQKLNVVVIS (102 aa)) is the Phytocyanin domain. The cysteines at positions 84 and 118 are disulfide-linked. A disordered region spans residues 136 to 330 (TAQSPHAAAP…GQKKSSANGM (195 aa)). 2 stretches are compositionally biased toward low complexity: residues 145–201 (PGSS…SPPG) and 224–234 (TSPVSPSSAPM). A compositionally biased stretch (polar residues) spans 249–260 (IPPSSAPMTSPP). The span at 263–312 (MAPKSSSPVSNSPTVSPSLAPGGSTSSSPSDSPSGSAMGPSGDGPSAAGD) shows a compositional bias: low complexity. A lipid anchor (GPI-anchor amidated serine) is attached at S325. A propeptide spans 326-349 (SANGMTVMSITTVLSLVLTIFLSA) (removed in mature form).

The protein belongs to the early nodulin-like (ENODL) family. Mostly expressed in leaves and roots, and, to a lower extent, in seedlings, stems and flowers, but barely in seeds.

Its subcellular location is the cell membrane. In terms of biological role, may act as a carbohydrate transporter. The protein is Early nodulin-like protein 2 of Arabidopsis thaliana (Mouse-ear cress).